Consider the following 331-residue polypeptide: Homoserine O-succinyltransferase (331 aa).

The active-site Acyl-thioester intermediate is Cys141. Substrate-binding residues include Lys162 and Ser190. The active-site Proton acceptor is His233. Glu235 is a catalytic residue. Arg247 is a binding site for substrate.

Belongs to the MetA family.

It localises to the cytoplasm. The catalysed reaction is L-homoserine + succinyl-CoA = O-succinyl-L-homoserine + CoA. It participates in amino-acid biosynthesis; L-methionine biosynthesis via de novo pathway; O-succinyl-L-homoserine from L-homoserine: step 1/1. Functionally, transfers a succinyl group from succinyl-CoA to L-homoserine, forming succinyl-L-homoserine. This Methylorubrum extorquens (strain DSM 6343 / CIP 106787 / DM4) (Methylobacterium extorquens) protein is Homoserine O-succinyltransferase.